Here is a 433-residue protein sequence, read N- to C-terminus: Zinc finger and SCAN domain-containing protein 4 (433 aa).

Residues 44 to 126 form the SCAN box domain; sequence RMVLNSFQDS…RFIEDLTDDS (83 aa). Polar residues-rich tracts occupy residues 165-185, 195-210, and 277-299; these read TTREANMGTPSQTSQDTSLET, GWNSSSKTTRVNENIT, and QPEQSSPESALTHQSNEGNSTCE. Disordered regions lie at residues 165–210 and 275–301; these read TTRE…ENIT and ISQPEQSSPESALTHQSNEGNSTCEVH. C2H2-type zinc fingers lie at residues 312–334, 340–362, 368–390, and 396–418; these read YKCEECPKVFKYLCHLLAHQRRH, FVCPECQKGFFQISDLRVHQIIH, FTCSMCKKSFSHKTNLRSHERIH, and YTCPFCKTSYRQSSTYHRHMRTH.

The protein resides in the nucleus. The protein localises to the chromosome. It is found in the telomere. Functionally, embryonic stem (ES) cell-specific transcription factor required to regulate ES cell pluripotency. Binds telomeres and plays a key role in genomic stability in ES cells by regulating telomere elongation. Acts as an activator of spontaneous telomere sister chromatid exchange (T-SCE) and telomere elongation in undifferentiated ES cells. The chain is Zinc finger and SCAN domain-containing protein 4 (ZSCAN4) from Homo sapiens (Human).